Here is a 182-residue protein sequence, read N- to C-terminus: Flavodoxin (182 aa).

The Flavodoxin-like domain maps to 4-173; sequence IGLFFGSDTG…RLKGWLSLIA (170 aa).

This sequence belongs to the flavodoxin family. Requires FMN as cofactor.

In terms of biological role, low-potential electron donor to a number of redox enzymes. NifF is the electron donor to nitrogenase. The protein is Flavodoxin (nifF) of Rhodobacter capsulatus (strain ATCC BAA-309 / NBRC 16581 / SB1003).